A 399-amino-acid chain; its full sequence is Acetate kinase (399 aa).

Asn9 contacts Mg(2+). Lys16 contributes to the ATP binding site. Arg90 provides a ligand contact to substrate. Asp147 serves as the catalytic Proton donor/acceptor. Residues 207 to 211, 281 to 283, and 333 to 337 contribute to the ATP site; these read HLGNG, DFR, and GVGEN. Residue Glu387 coordinates Mg(2+).

Belongs to the acetokinase family. Homodimer. Requires Mg(2+) as cofactor. Mn(2+) is required as a cofactor.

Its subcellular location is the cytoplasm. The enzyme catalyses acetate + ATP = acetyl phosphate + ADP. Its pathway is metabolic intermediate biosynthesis; acetyl-CoA biosynthesis; acetyl-CoA from acetate: step 1/2. In terms of biological role, catalyzes the formation of acetyl phosphate from acetate and ATP. Can also catalyze the reverse reaction. This is Acetate kinase from Mycobacterium sp. (strain JLS).